We begin with the raw amino-acid sequence, 116 residues long: uncharacterized protein (116 aa).

The region spanning 6 to 60 (LKKCRKQKKLTQQNMADKLGITRPAYTAYELGSREPDYKTLINISNILDVSLDYL) is the HTH cro/C1-type domain. A DNA-binding region (H-T-H motif) is located at residues 17–36 (QQNMADKLGITRPAYTAYEL).

This is an uncharacterized protein from Bacillus subtilis (strain 168).